We begin with the raw amino-acid sequence, 351 residues long: Phosphoribosylformylglycinamidine cyclo-ligase (351 aa).

It belongs to the AIR synthase family.

It is found in the cytoplasm. The catalysed reaction is 2-formamido-N(1)-(5-O-phospho-beta-D-ribosyl)acetamidine + ATP = 5-amino-1-(5-phospho-beta-D-ribosyl)imidazole + ADP + phosphate + H(+). Its pathway is purine metabolism; IMP biosynthesis via de novo pathway; 5-amino-1-(5-phospho-D-ribosyl)imidazole from N(2)-formyl-N(1)-(5-phospho-D-ribosyl)glycinamide: step 2/2. The polypeptide is Phosphoribosylformylglycinamidine cyclo-ligase (Burkholderia cenocepacia (strain HI2424)).